Reading from the N-terminus, the 495-residue chain is MVFSSNVFLFLFLPIFLGLYYLSGQRYRNLLLLLASYVFYAWWRVDFLALFAAVTLWNYWIGLKVGAAGVRTKPAQRWLLLGVVVDSINVMMKSAGLEPFILTHVLLPIGISFYIFESISYIIDVYRGDTPATRNLIDFAAFVAIFPHLIAGPVLRFRDLADQFNNRTHTLDKFSEGCTRFMQGFIKKVFIADTLAVVADHCFALQNPTTGDAWLGALAYTAQLYFDFSGYSDMAIGLGLMMGFRFMENFKQPYISQSITEFWRRWHISLSTWLRDYLYITLGGNRKGTLTTYRNLFLTMLLGGLWHGANITYIVWGAWHGMWLAIEKAIGLNTSPRSFNPVRWAFTFLLVVMGWVIFRAENLHVAGRMYGAMFSFGEWSLSELNRANLTGLQVATLVVAYATLAFFGLRDFYTNRPAEKTKPADPSLIKAVPGDNPGSIHEPGFTVGQDAAVQPAYWTADWPRYAMRAAVLLLFVASILKLSAQSFSPFLYFQF.

8 consecutive transmembrane segments (helical) span residues 7 to 24 (VFLF…YLSG), 39 to 61 (FYAW…NYWI), 101 to 123 (ILTH…SYII), 136 to 158 (LIDF…LRFR), 296 to 318 (LFLT…VWGA), 344 to 366 (WAFT…LHVA), 387 to 409 (ANLT…FFGL), and 471 to 493 (VLLL…FLYF). Residue His-307 is part of the active site.

The protein belongs to the membrane-bound acyltransferase family.

It localises to the cell inner membrane. It functions in the pathway glycan biosynthesis; alginate biosynthesis. Its function is as follows. Together with AlgJ and AlgF, forms an inner membrane complex which probably interacts with the alginate polymerization-transport complex and adds acetyl groups at the O-2 and O-3 positions of mannuronate residues. Acetylation of alginate is important for the architecture of biofilms and increases the ability of alginate to act as a defense barrier. The polypeptide is Probable alginate O-acetylase AlgI (algI) (Pseudomonas fluorescens).